A 714-amino-acid chain; its full sequence is K(+)-insensitive pyrophosphate-energized proton pump (714 aa).

A signal peptide spans Met1–Ala20. The next 4 helical transmembrane spans lie at Leu52–Leu74, Gly85–Leu105, Ile128–Leu148, and Val166–Phe186. Lys188 contributes to the substrate binding site. Mg(2+) is bound by residues Asp191, Asp195, Asn218, and Asp221. The next 6 membrane-spanning stretches (helical) occupy residues Ala238 to Leu258, Val263 to Val283, Gly298 to Val318, Gly333 to Ile353, Gly383 to Ile403, and Leu411 to Leu431. Asp439 is a binding site for Mg(2+). A run of 4 helical transmembrane segments spans residues Ala470–Ala490, Tyr522–Met542, Val591–Ile611, and Ala618–Ile638. Residues Asp648, Asp680, and Asp684 each contribute to the Ca(2+) site. Lys687 contributes to the substrate binding site. A helical transmembrane segment spans residues Ala693–Ala713.

The protein belongs to the H(+)-translocating pyrophosphatase (TC 3.A.10) family. K(+)-insensitive subfamily. In terms of assembly, homodimer. Requires Mg(2+) as cofactor.

The protein resides in the acidocalcisome membrane. The catalysed reaction is diphosphate + H2O + H(+)(in) = 2 phosphate + 2 H(+)(out). Proton pump that utilizes the energy of pyrophosphate hydrolysis as the driving force for proton movement across the membrane. Generates a proton motive force. This is K(+)-insensitive pyrophosphate-energized proton pump from Agrobacterium fabrum (strain C58 / ATCC 33970) (Agrobacterium tumefaciens (strain C58)).